The sequence spans 513 residues: DNA damage response protein kinase DUN1 (513 aa).

Residues 1-12 show a composition bias toward basic and acidic residues; the sequence is MSLSTKREHSGD. Residues 1-29 form a disordered region; sequence MSLSTKREHSGDVTDSSFKRQQRSNKPSS. S10 is modified (phosphoserine). Residues 56–112 enclose the FHA domain; that stretch reads TTIGRSRSCDVILSEPDISTFHAEFHLLQMDVDNFQRNLINVIDKSRNGTFINGNRL. S139 carries the phosphoserine modification. The region spanning 200 to 480 is the Protein kinase domain; it reads YLLGKELGAG…IDEALNHPWF (281 aa). ATP is bound by residues 206–214 and K229; that span reads LGAGHYALV. D328 acts as the Proton acceptor in catalysis. T380 carries the phosphothreonine modification.

Belongs to the protein kinase superfamily. CAMK Ser/Thr protein kinase family. CHEK2 subfamily. In terms of assembly, interacts with the PAB-dependent poly(A)-nuclease (PAN) complex regulatory subunit PAN3 via its forkhead-associated (FHA) domain. Autophosphorylation increases in response to DNA damage.

The protein localises to the nucleus. The enzyme catalyses L-seryl-[protein] + ATP = O-phospho-L-seryl-[protein] + ADP + H(+). It carries out the reaction L-threonyl-[protein] + ATP = O-phospho-L-threonyl-[protein] + ADP + H(+). Transducer of the DNA damage signal. Phosphorylates SML1 on serine residues. Cooperates with the PAN deadenylation complex in the regulation of RAD5 mRNA levels and cell survival in response to replicational stress. In Saccharomyces cerevisiae (strain ATCC 204508 / S288c) (Baker's yeast), this protein is DNA damage response protein kinase DUN1 (DUN1).